Reading from the N-terminus, the 276-residue chain is Dermonecrotic toxin LsaSicTox-alphaIB2i (276 aa).

His5 is a catalytic residue. The Mg(2+) site is built by Glu25 and Asp27. The active-site Nucleophile is His41. 2 cysteine pairs are disulfide-bonded: Cys45-Cys51 and Cys47-Cys190. A Mg(2+)-binding site is contributed by Asp85. N-linked (GlcNAc...) asparagine glycans are attached at residues Asn129 and Asn253.

This sequence belongs to the arthropod phospholipase D family. Class II subfamily. Mg(2+) serves as cofactor. In terms of tissue distribution, expressed by the venom gland.

It localises to the secreted. The enzyme catalyses an N-(acyl)-sphingosylphosphocholine = an N-(acyl)-sphingosyl-1,3-cyclic phosphate + choline. It carries out the reaction an N-(acyl)-sphingosylphosphoethanolamine = an N-(acyl)-sphingosyl-1,3-cyclic phosphate + ethanolamine. It catalyses the reaction a 1-acyl-sn-glycero-3-phosphocholine = a 1-acyl-sn-glycero-2,3-cyclic phosphate + choline. The catalysed reaction is a 1-acyl-sn-glycero-3-phosphoethanolamine = a 1-acyl-sn-glycero-2,3-cyclic phosphate + ethanolamine. Functionally, dermonecrotic toxins cleave the phosphodiester linkage between the phosphate and headgroup of certain phospholipids (sphingolipid and lysolipid substrates), forming an alcohol (often choline) and a cyclic phosphate. This toxin acts on sphingomyelin (SM). It may also act on ceramide phosphoethanolamine (CPE), lysophosphatidylcholine (LPC) and lysophosphatidylethanolamine (LPE), but not on lysophosphatidylserine (LPS), and lysophosphatidylglycerol (LPG). It acts by transphosphatidylation, releasing exclusively cyclic phosphate products as second products. Induces dermonecrosis, hemolysis, increased vascular permeability, edema, inflammatory response, and platelet aggregation. This Loxosceles sabina (Tucson recluse spider) protein is Dermonecrotic toxin LsaSicTox-alphaIB2i.